The chain runs to 189 residues: Small ribosomal subunit protein uS5 (189 aa).

The S5 DRBM domain maps to 22–85; sequence FVDKLVAINR…ESAKRDLIFV (64 aa).

This sequence belongs to the universal ribosomal protein uS5 family. In terms of assembly, part of the 30S ribosomal subunit. Contacts proteins S4 and S8.

In terms of biological role, with S4 and S12 plays an important role in translational accuracy. Functionally, located at the back of the 30S subunit body where it stabilizes the conformation of the head with respect to the body. The polypeptide is Small ribosomal subunit protein uS5 (Allorhizobium ampelinum (strain ATCC BAA-846 / DSM 112012 / S4) (Agrobacterium vitis (strain S4))).